Consider the following 290-residue polypeptide: Ubiquinone biosynthesis protein COQ4, mitochondrial (290 aa).

The N-terminal 32 residues, 1-32 (MAKRVCVGDLRKLAGSVSTPSRCILPPHARCF), are a transit peptide targeting the mitochondrion. Positions 168, 169, 172, and 184 each coordinate Zn(2+). A disordered region spans residues 260–290 (KPPDLREMRKAEREAQKKDKEAKETMTRAAV).

It belongs to the COQ4 family. In terms of assembly, component of a multi-subunit COQ enzyme complex, composed of at least COQ3, COQ4, COQ5, COQ6, COQ7 and COQ9. Zn(2+) serves as cofactor.

It is found in the mitochondrion inner membrane. The catalysed reaction is a 4-hydroxy-3-methoxy-5-(all-trans-polyprenyl)benzoate + H(+) = a 2-methoxy-6-(all-trans-polyprenyl)phenol + CO2. It participates in cofactor biosynthesis; ubiquinone biosynthesis. In terms of biological role, lyase that catalyzes the C1-decarboxylation of 4-hydroxy-3-methoxy-5-(all-trans-polyprenyl)benzoic acid into 2-methoxy-6-(all-trans-polyprenyl)phenol during ubiquinone biosynthesis. In Phaeosphaeria nodorum (strain SN15 / ATCC MYA-4574 / FGSC 10173) (Glume blotch fungus), this protein is Ubiquinone biosynthesis protein COQ4, mitochondrial.